An 803-amino-acid polypeptide reads, in one-letter code: Ras GTPase-activating protein 4 (803 aa).

2 C2 domains span residues 1 to 105 and 116 to 232; these read MAKR…SGWA and VQGE…EGWF. Ca(2+) is bound by residues Asp-21, Asp-27, Asp-74, Asp-76, Ser-79, Asp-82, Asp-149, Asp-155, Asp-202, Asp-204, Ser-207, and Asp-210. Residues 318-546 form the Ras-GAP domain; sequence GLAKDFLDLL…AQLKDFITKL (229 aa). The PH domain occupies 566–673; that stretch reads PPVKEGPLFI…WLSALRKVSI (108 aa). The Btk-type zinc-finger motif lies at 675 to 711; sequence NTGLLGSYHPGVFRGDKWSCCHQKEKTGQGCDKTRSR. Zn(2+) is bound by residues His-683, Cys-694, Cys-695, and Cys-705. Positions 781 to 803 are disordered; sequence EAHSSSPAGSPPSEPNCLLELQT.

It depends on Ca(2+) as a cofactor. As to expression, widely expressed.

Its subcellular location is the cytoplasm. It localises to the cytosol. The protein resides in the cell membrane. In terms of biological role, ca(2+)-dependent Ras GTPase-activating protein, that switches off the Ras-MAPK pathway following a stimulus that elevates intracellular calcium. Functions as an adaptor for Cdc42 and Rac1 during FcR-mediated phagocytosis. The sequence is that of Ras GTPase-activating protein 4 (RASA4) from Homo sapiens (Human).